The sequence spans 83 residues: Kappa-theraphotoxin-Cg2a (83 aa).

The signal sequence occupies residues 1-21 (MKGSAFAIILGLVVLCACSFA). The propeptide occupies 22 to 53 (EDEQDQFASPNELLRSMFLESRHELIPEVEGR). Disulfide bonds link Cys-55–Cys-69, Cys-62–Cys-74, and Cys-68–Cys-78. At Leu-82 the chain carries Leucine amide.

Belongs to the neurotoxin 30 (phrixotoxin) family. As to expression, expressed by the venom gland.

Its subcellular location is the secreted. Functionally, inhibits voltage-gated potassium channels of the subtype Kv4.1/KCND1 with high affinity and shows weak effects on Kv4.2/KCND2 and Kv2.1/KCNB1 subtypes. The toxin modifies the gating behavior of the channel and may interact with the S3-S4 extracellular loop. The sequence is that of Kappa-theraphotoxin-Cg2a from Chilobrachys guangxiensis (Chinese earth tiger tarantula).